A 468-amino-acid chain; its full sequence is MVMSRGRIPRLGAAVLVALTTAAAACGADSQGLVVSFYTPATDGATFTAIAQRCNQQFGGRFTIAQVSLPRSPNEQRLQLARRLTGNDRTLDVMALDVVWTAEFAEAGWALPLSDDPAGLAENDAVADTLPGPLATAGWNHKLYAAPVTTNTQLLWYRPDLVNSPPTDWNAMIAEAARLHAAGEPSWIAVQANQGEGLVVWFNTLLVSAGGSVLSEDGRHVTLTDTPAHRAATVSALQILKSVATTPGADPSITRTEEGSARLAFEQGKAALEVNWPFVFASMLENAVKGGVPFLPLNRIPQLAGSINDIGTFTPSDEQFRIAYDASQQVFGFAPYPAVAPGQPAKVTIGGLNLAVAKTTRHRAEAFEAVRCLRDQHNQRYVSLEGGLPAVRASLYSDPQFQAKYPMHAIIRQQLTDAAVRPATPVYQALSIRLAAVLSPITEIDPESTADELAAQAQKAIDGMGLLP.

Residues 1 to 25 (MVMSRGRIPRLGAAVLVALTTAAAA) form the signal peptide. The N-palmitoyl cysteine moiety is linked to residue Cys26. The S-diacylglycerol cysteine moiety is linked to residue Cys26. Cysteines 54 and 372 form a disulfide. Alpha,alpha-trehalose-binding residues include Asp97, Asn151, Trp276, Phe278, Gly351, and Arg421.

The protein belongs to the bacterial solute-binding protein 1 family. As to quaternary structure, monomer. The complex is composed of two ATP-binding proteins (SugC), two transmembrane proteins (SugA and SugB) and a solute-binding protein (LpqY).

It localises to the cell inner membrane. Its function is as follows. Part of the ABC transporter complex LpqY-SugA-SugB-SugC, which is highly specific for uptake of trehalose. Involved in the recycling of extracellular trehalose released from trehalose-containing molecules synthesized by M.tuberculosis. Trehalose uptake is essential for virulence. The polypeptide is Trehalose-binding lipoprotein LpqY (lpqY) (Mycobacterium tuberculosis (strain CDC 1551 / Oshkosh)).